The sequence spans 358 residues: 3-dehydroquinate synthase (358 aa).

NAD(+) contacts are provided by residues 70–75 (DGEQFK), 104–108 (GVIGD), 128–129 (TT), Lys-141, Lys-150, and 168–171 (CLHT). Glu-183, His-246, and His-263 together coordinate Zn(2+).

This sequence belongs to the sugar phosphate cyclases superfamily. Dehydroquinate synthase family. It depends on Co(2+) as a cofactor. The cofactor is Zn(2+). Requires NAD(+) as cofactor.

The protein resides in the cytoplasm. The catalysed reaction is 7-phospho-2-dehydro-3-deoxy-D-arabino-heptonate = 3-dehydroquinate + phosphate. The protein operates within metabolic intermediate biosynthesis; chorismate biosynthesis; chorismate from D-erythrose 4-phosphate and phosphoenolpyruvate: step 2/7. In terms of biological role, catalyzes the conversion of 3-deoxy-D-arabino-heptulosonate 7-phosphate (DAHP) to dehydroquinate (DHQ). This chain is 3-dehydroquinate synthase, found in Shewanella baltica (strain OS195).